Consider the following 396-residue polypeptide: Phosphoglycerate kinase (396 aa).

Residues 21–23 (DFN), arginine 37, 60–63 (HLGR), arginine 121, and arginine 154 each bind substrate. Residues lysine 205, glycine 296, glutamate 327, and 353–356 (GGDS) contribute to the ATP site.

It belongs to the phosphoglycerate kinase family. Monomer.

It is found in the cytoplasm. The enzyme catalyses (2R)-3-phosphoglycerate + ATP = (2R)-3-phospho-glyceroyl phosphate + ADP. It functions in the pathway carbohydrate degradation; glycolysis; pyruvate from D-glyceraldehyde 3-phosphate: step 2/5. The protein is Phosphoglycerate kinase of Anaeromyxobacter sp. (strain Fw109-5).